We begin with the raw amino-acid sequence, 767 residues long: Photosystem I P700 chlorophyll a apoprotein A1 (767 aa).

A disordered region spans residues 1-22 (MTISPPESGEKDKKILESPVKA). Residues 8–22 (SGEKDKKILESPVKA) are compositionally biased toward basic and acidic residues. A run of 8 helical transmembrane segments spans residues 76–99 (IFSA…FHGA), 162–185 (LMAL…FHYH), 201–225 (LNHH…HIGA), 309–327 (VSHH…GHMY), 368–391 (RHAQ…HHMY), 407–433 (LGLF…IAMV), 455–477 (ALIS…LYIH), and 558–576 (LMIH…LILL). The [4Fe-4S] cluster site is built by Cys-600 and Cys-609. Transmembrane regions (helical) follow at residues 616–637 (HVFL…HFSW) and 681–703 (ISMY…MFLF). His-692 serves as a coordination point for divinylchlorophyll a'. Positions 700 and 708 each coordinate divinyl chlorophyll a. Trp-709 is a phylloquinone binding site. The chain crosses the membrane as a helical span at residues 741 to 761 (AVGVTHFLVGGIATTWAFFHA).

It belongs to the PsaA/PsaB family. The PsaA/B heterodimer binds the P700 divinyl chlorophyll special pair and subsequent electron acceptors. PSI consists of a core antenna complex that captures photons, and an electron transfer chain that converts photonic excitation into a charge separation. The cyanobacterial PSI reaction center is composed of one copy each of PsaA,B,C,D,E,F,I,J,K,L,M and X, and forms trimeric complexes. Requires PSI electron transfer chain: 5 divinyl chlorophyll a, 1 divinyl chlorophyll a', 2 phylloquinones and 3 4Fe-4S clusters. PSI core antenna: 90 divinyl chlorophyll a, 22 carotenoids, 3 phospholipids and 1 galactolipid. P700 is a divinyl chlorophyll a/divinyl chlorophyll a' dimer, A0 is one or more divinyl chlorophyll a, A1 is one or both phylloquinones and FX is a shared 4Fe-4S iron-sulfur center. as cofactor.

It localises to the cellular thylakoid membrane. The enzyme catalyses reduced [plastocyanin] + hnu + oxidized [2Fe-2S]-[ferredoxin] = oxidized [plastocyanin] + reduced [2Fe-2S]-[ferredoxin]. In terms of biological role, psaA and PsaB bind P700, the primary electron donor of photosystem I (PSI), as well as the electron acceptors A0, A1 and FX. PSI is a plastocyanin/cytochrome c6-ferredoxin oxidoreductase, converting photonic excitation into a charge separation, which transfers an electron from the donor P700 chlorophyll pair to the spectroscopically characterized acceptors A0, A1, FX, FA and FB in turn. Oxidized P700 is reduced on the lumenal side of the thylakoid membrane by plastocyanin or cytochrome c6. The protein is Photosystem I P700 chlorophyll a apoprotein A1 of Prochlorococcus marinus subsp. pastoris (strain CCMP1986 / NIES-2087 / MED4).